A 938-amino-acid chain; its full sequence is Isoleucine--tRNA ligase (938 aa).

A 'HIGH' region motif is present at residues 58–68; the sequence is PYANGSIHIGH. At lysine 183 the chain carries N6-acetyllysine. Glutamate 561 lines the L-isoleucyl-5'-AMP pocket. Residues 602–606 carry the 'KMSKS' region motif; that stretch reads KMSKS. Lysine 605 contributes to the ATP binding site. Positions 901, 904, 921, and 924 each coordinate Zn(2+).

This sequence belongs to the class-I aminoacyl-tRNA synthetase family. IleS type 1 subfamily. Monomer. Zn(2+) serves as cofactor.

It is found in the cytoplasm. It carries out the reaction tRNA(Ile) + L-isoleucine + ATP = L-isoleucyl-tRNA(Ile) + AMP + diphosphate. Functionally, catalyzes the attachment of isoleucine to tRNA(Ile). As IleRS can inadvertently accommodate and process structurally similar amino acids such as valine, to avoid such errors it has two additional distinct tRNA(Ile)-dependent editing activities. One activity is designated as 'pretransfer' editing and involves the hydrolysis of activated Val-AMP. The other activity is designated 'posttransfer' editing and involves deacylation of mischarged Val-tRNA(Ile). The polypeptide is Isoleucine--tRNA ligase (Escherichia coli O45:K1 (strain S88 / ExPEC)).